Consider the following 545-residue polypeptide: Toxin BC_0920 (545 aa).

The 217-residue stretch at 1 to 217 (MSLNMYLGEV…ARQAANSIEE (217 aa)) folds into the LXG domain.

It in the N-terminal section; belongs to the LXG family. The protein in the C-terminal section; belongs to the bacterial EndoU family. Probably interacts with cognate immunity protein BC_0921. The interaction inhibits the toxic activity of BC_0921.

The protein resides in the secreted. Functionally, toxic component of an LXG toxin-immunity module. The C-terminus (residues 322-545) has RNase activity in E.coli which is neutralized by cognate immunity protein BC_0921, but not by immunity proteins specific to other toxins with the LXG domain. Degrades 5S rRNA and several tRNAs in vitro; cleavage is endonucleolytic within the anticodon loop for tRNA(GAU-Ile) and tRNA(UUC-Glu) but total for 5S rRNA and at least one other tRNA. RNase activity is suppressed by cognate immunity protein BC_0921. This is Toxin BC_0920 from Bacillus cereus (strain ATCC 14579 / DSM 31 / CCUG 7414 / JCM 2152 / NBRC 15305 / NCIMB 9373 / NCTC 2599 / NRRL B-3711).